We begin with the raw amino-acid sequence, 30 residues long: Large ribosomal subunit protein bL25 (30 aa).

The protein belongs to the bacterial ribosomal protein bL25 family. As to quaternary structure, part of the 50S ribosomal subunit; part of the 5S rRNA/L5/L18/L25 subcomplex. Contacts the 5S rRNA. Binds to the 5S rRNA independently of L5 and L18.

Functionally, this is one of the proteins that binds to the 5S RNA in the ribosome where it forms part of the central protuberance. The polypeptide is Large ribosomal subunit protein bL25 (rplY) (Anabaena variabilis).